Consider the following 100-residue polypeptide: Large ribosomal subunit protein bL21 (100 aa).

The protein belongs to the bacterial ribosomal protein bL21 family. Part of the 50S ribosomal subunit. Contacts protein L20.

Functionally, this protein binds to 23S rRNA in the presence of protein L20. The sequence is that of Large ribosomal subunit protein bL21 from Ureaplasma urealyticum serovar 10 (strain ATCC 33699 / Western).